Reading from the N-terminus, the 444-residue chain is Multidrug resistance protein MdtA (444 aa).

The signal sequence occupies residues 1–20 (MKSQSKRTSRLFVFVGVVVA). Over residues 37-52 (NNTSGAQQSARGQDTS) the composition is skewed to polar residues. 2 disordered regions span residues 37–60 (NNTS…RNTP) and 398–444 (TPRS…AEKS). Positions 406–419 (ANPASAEKAAAEAE) are enriched in low complexity. Over residues 435–444 (ARSTTAAEKS) the composition is skewed to polar residues.

The protein belongs to the membrane fusion protein (MFP) (TC 8.A.1) family. In terms of assembly, part of a tripartite efflux system composed of MdtA, MdtB and MdtC.

It is found in the cell inner membrane. The polypeptide is Multidrug resistance protein MdtA (Yersinia pestis bv. Antiqua (strain Antiqua)).